Reading from the N-terminus, the 249-residue chain is Ubiquinone biosynthesis O-methyltransferase (249 aa).

Arg41, Gly72, Asp93, and Met136 together coordinate S-adenosyl-L-methionine.

The protein belongs to the methyltransferase superfamily. UbiG/COQ3 family.

It catalyses the reaction a 3-demethylubiquinol + S-adenosyl-L-methionine = a ubiquinol + S-adenosyl-L-homocysteine + H(+). It carries out the reaction a 3-(all-trans-polyprenyl)benzene-1,2-diol + S-adenosyl-L-methionine = a 2-methoxy-6-(all-trans-polyprenyl)phenol + S-adenosyl-L-homocysteine + H(+). Its pathway is cofactor biosynthesis; ubiquinone biosynthesis. In terms of biological role, O-methyltransferase that catalyzes the 2 O-methylation steps in the ubiquinone biosynthetic pathway. This chain is Ubiquinone biosynthesis O-methyltransferase, found in Methylobacterium sp. (strain 4-46).